A 318-amino-acid chain; its full sequence is Protease HtpX homolog (318 aa).

2 helical membrane-spanning segments follow: residues 6-26 (TAML…LIGG) and 28-48 (GGMM…YWNS). Zn(2+) is bound at residue histidine 130. Glutamate 131 is an active-site residue. Residue histidine 134 participates in Zn(2+) binding. A run of 2 helical transmembrane segments spans residues 145-165 (ITAT…FFGG) and 173-193 (PLGF…AMLV). Residue glutamate 202 coordinates Zn(2+). Residues 284-318 (NVSTGPVRAVNPTRKSRSVPNTGRGGSQPPRGPWS) form a disordered region.

This sequence belongs to the peptidase M48B family. Zn(2+) is required as a cofactor.

The protein localises to the cell inner membrane. This chain is Protease HtpX homolog, found in Rhizobium etli (strain ATCC 51251 / DSM 11541 / JCM 21823 / NBRC 15573 / CFN 42).